A 282-amino-acid chain; its full sequence is Transcription factor LBX1 (282 aa).

The span at 1–20 shows a compositional bias: basic and acidic residues; that stretch reads MTSKEDGKAAPGEERRRSPL. Residues 1 to 36 are disordered; it reads MTSKEDGKAAPGEERRRSPLDHLPPPANSNKPLTPF. Positions 125-184 form a DNA-binding region, homeobox; that stretch reads RRKSRTAFTNHQIYELEKRFLYQKYLSPADRDQIAQQLGLTNAQVITWFQNRRAKLKRDL. The tract at residues 210 to 282 is disordered; it reads ELEQNSEASG…EEDEEIDVDD (73 aa). Gly residues predominate over residues 218-227; that stretch reads SGGGGGGGCG. Residues 269–282 are compositionally biased toward acidic residues; the sequence is CSEDEEDEEIDVDD.

As to quaternary structure, interacts with SKOR1 which acts as a transcriptional corepressor. As to expression, expressed in the dorsal part of the spinal cord and hindbrain and in presumptive myogenic cells in lateral regions of differentiating somites.

The protein resides in the nucleus. In terms of biological role, transcription factor required for the development of GABAergic interneurons in the dorsal horn of the spinal cord and migration and further development of hypaxial muscle precursor cells for limb muscles, diaphragm and hypoglossal cord. The sequence is that of Transcription factor LBX1 (Lbx1) from Mus musculus (Mouse).